Here is a 162-residue protein sequence, read N- to C-terminus: Protein FAM162B (162 aa).

Residues 26–69 form a disordered region; sequence EATRRPAPALPPRGLPCYSSGGAPSNSGPQGHGEIHRVPTQRRP. The chain crosses the membrane as a helical span at residues 107 to 127; that stretch reads VKACYIMIGLTIIACFAVIVS.

The protein belongs to the UPF0389 family.

The protein localises to the membrane. This chain is Protein FAM162B (FAM162B), found in Homo sapiens (Human).